The chain runs to 224 residues: MKKLLLIATTSATILSSSISFADDMGNEWYLRVDAGAAMFNKEQDKATSVKLKSNTTVPVDLGIGYYIFENFRADLTLGTIIGGKLKASGSATHAPFTGTNVSVSHKPTITRLLINGYVDLTNFDLFDVFAGAGVGPALVKEKITYNGITGLSSNTKNRTNISYRLTLGTSAQIADGVKAELAYSWIYDGRTKSKNVIYQGTSVLTGGMRYQSHNLTAGIRFDI.

Positions 1 to 22 are cleaved as a signal peptide; it reads MKKLLLIATTSATILSSSISFA.

This is Putative adhesin A1C_06425 from Rickettsia akari (strain Hartford).